Here is a 388-residue protein sequence, read N- to C-terminus: 3-oxo-tetronate kinase (388 aa).

ATP-binding positions include S258 and G360 to T363.

Belongs to the four-carbon acid sugar kinase family.

The catalysed reaction is 3-dehydro-L-erythronate + ATP = 3-dehydro-4-O-phospho-L-erythronate + ADP + H(+). It catalyses the reaction 3-dehydro-D-erythronate + ATP = 3-dehydro-4-O-phospho-D-erythronate + ADP + H(+). Functionally, catalyzes the ATP-dependent phosphorylation of 3-oxo-tetronate to 3-oxo-tetronate 4-phosphate. This chain is 3-oxo-tetronate kinase, found in Escherichia coli (strain K12).